We begin with the raw amino-acid sequence, 88 residues long: MLDKEKKAEIINKFKLHDTDTGSPEVQIALLTERINNLNAHLQVHKKDHHSRRGLLKMVGQRRALLNYLMKTDMERYRAIIEKLDLRK.

Belongs to the universal ribosomal protein uS15 family. In terms of assembly, part of the 30S ribosomal subunit. Forms a bridge to the 50S subunit in the 70S ribosome, contacting the 23S rRNA.

One of the primary rRNA binding proteins, it binds directly to 16S rRNA where it helps nucleate assembly of the platform of the 30S subunit by binding and bridging several RNA helices of the 16S rRNA. Its function is as follows. Forms an intersubunit bridge (bridge B4) with the 23S rRNA of the 50S subunit in the ribosome. The protein is Small ribosomal subunit protein uS15 of Thermoanaerobacter pseudethanolicus (strain ATCC 33223 / 39E) (Clostridium thermohydrosulfuricum).